The sequence spans 334 residues: Glycerol-3-phosphate dehydrogenase [NAD(P)+] (334 aa).

3 residues coordinate NADPH: Trp13, Arg33, and Lys106. Residues Lys106, Gly137, and Ser139 each coordinate sn-glycerol 3-phosphate. Ala141 contacts NADPH. Sn-glycerol 3-phosphate-binding residues include Lys192, Asp245, Ser255, Arg256, and Asn257. The Proton acceptor role is filled by Lys192. Arg256 lines the NADPH pocket. NADPH is bound by residues Val280 and Glu282.

It belongs to the NAD-dependent glycerol-3-phosphate dehydrogenase family.

It is found in the cytoplasm. It carries out the reaction sn-glycerol 3-phosphate + NAD(+) = dihydroxyacetone phosphate + NADH + H(+). The catalysed reaction is sn-glycerol 3-phosphate + NADP(+) = dihydroxyacetone phosphate + NADPH + H(+). The protein operates within membrane lipid metabolism; glycerophospholipid metabolism. Functionally, catalyzes the reduction of the glycolytic intermediate dihydroxyacetone phosphate (DHAP) to sn-glycerol 3-phosphate (G3P), the key precursor for phospholipid synthesis. The sequence is that of Glycerol-3-phosphate dehydrogenase [NAD(P)+] from Chlamydia abortus (strain DSM 27085 / S26/3) (Chlamydophila abortus).